The primary structure comprises 1044 residues: Elongation factor 3A (1044 aa).

Position 2 is an N-acetylserine (Ser2). The stretch at 5–42 (QQSIKVLEELFQKLSVATADNRHEIASEVASFLNGNII) is one HEAT 1 repeat. Ile42, His44, and Ser83 together coordinate ADP. HEAT repeat units lie at residues 86–123 (PYIVQLVPAICTNAGNKDKEIQSVASETLISIVNAVNP), 125–162 (AIKALLPHLTNAIVETNKWQEKIAILAAISAMVDAAKD), 166–203 (LRMPELIPVLSETMWDTKKEVKAAATAAMTKATETVDN), 205–241 (DIERFIPSLIQCIADPTEVPETVHLLGATTFVAEVTP), 242–279 (ATLSIMVPLLSRGLNERETGIKRKSAVIIDNMCKLVED), and 285–323 (PFLGKLLPGLKSNFATIADPEAREVTLRALKTLRRVGNV). Residues Lys187 and Lys196 each carry the N6,N6,N6-trimethyllysine modification. Lys350 participates in a covalent cross-link: Glycyl lysine isopeptide (Lys-Gly) (interchain with G-Cter in ubiquitin). 3 residues coordinate ADP: Thr392, His396, and Glu397. In terms of domain architecture, ABC transporter 1 spans 426-641 (DEGEDLCNCE…CPAAKAYEEL (216 aa)). Residue Lys636 forms a Glycyl lysine isopeptide (Lys-Gly) (interchain with G-Cter in ubiquitin) linkage. Ser642 bears the Phosphoserine mark. Positions 667 to 993 (VKVTNMEFQY…AGPRIEKKED (327 aa)) constitute an ABC transporter 2 domain. Asn703 lines the ADP pocket. Lys789 is modified (N6,N6,N6-trimethyllysine). Glu922, Asn925, and His951 together coordinate ADP. Thr972 is subject to Phosphothreonine. Ser974 is subject to Phosphoserine. Residues 974–1044 (SGHNWVSGQG…DAYVSSDEEF (71 aa)) form a disordered region. Positions 1007 to 1031 (GGKKKKKLSSAELRKKKKERMKKKK) are enriched in basic residues. A phosphoserine mark is found at Ser1039 and Ser1040.

The protein belongs to the ABC transporter superfamily. ABCF family. EF3 subfamily. Monomer. Interacts with elongation factor 1A (eEF1A). Interacts through its N-terminus with 18S rRNA. Associates with ribosomes; preferentially binds ribosomes in the post-translocational state (bearing a peptidyl-tRNA in the P-site) in the presence of ATP, suggesting that ATP hydrolysis is required for ribosome dissociation.

It is found in the cytoplasm. Its subcellular location is the cytosol. The catalysed reaction is ATP + H2O = ADP + phosphate + H(+). It functions in the pathway protein biosynthesis; polypeptide chain elongation. Inhibited by the translational inhibitors neomycin and alpha-sarcin, which suppress the ATPase activity. Functionally, ribosome-dependent ATPase that functions in cytoplasmic translation elongation. Required for the ATP-dependent release of deacylated tRNA from the ribosomal E-site during protein biosynthesis. Stimulates the eEF1A-dependent binding of aminoacyl-tRNA to the ribosomal A-site, which has reduced affinity for tRNA as long as the E-site is occupied. Assists translation termination by stimulating the release of nascent protein from the ribosome by release factors. In nutrient-replete conditions, occupies the space on the ribosome bound by GCN1 during amino acid starvation conditions, and therefore indirectly negatively regulates GCN2 kinase activity in replete conditions. In Saccharomyces cerevisiae (strain ATCC 204508 / S288c) (Baker's yeast), this protein is Elongation factor 3A (YEF3).